The primary structure comprises 34 residues: MSDINTARLPLFLPPVRMPPCVGDDIEMVLTRGE.

A propeptide spanning residues 1-10 is cleaved from the precursor; that stretch reads MSDINTARLP. A cross-link (cyclopeptide (Leu-Pro)) is located at residues 11–20; sequence LFLPPVRMPP. Positions 21-34 are excised as a propeptide; the sequence is CVGDDIEMVLTRGE.

It belongs to the MSDIN fungal toxin family. Post-translationally, processed by the macrocyclase-peptidase enzyme POPB to yield a toxic cyclic decapeptide. POPB first removes 10 residues from the N-terminus. Conformational trapping of the remaining peptide forces the enzyme to release this intermediate rather than proceed to macrocyclization. The enzyme rebinds the remaining peptide in a different conformation and catalyzes macrocyclization of the N-terminal 10 residues.

Functionally, probable toxin that belongs to the MSDIN-like toxin family responsible for a large number of food poisoning cases and deaths. This chain is MSDIN-like toxin proprotein 4, found in Amanita bisporigera (Destroying angel).